A 48-amino-acid polypeptide reads, in one-letter code: Toxin CSTX-15 (48 aa).

4 disulfides stabilise this stretch: C3–C18, C10–C27, C17–C42, and C29–C40.

Belongs to the neurotoxin 19 (CSTX) family. 12 subfamily. In terms of assembly, heterodimer of A and B chains; disulfide-linked. Post-translationally, contains 4 disulfide bonds. As to expression, expressed by the venom gland.

It localises to the secreted. This Cupiennius salei (American wandering spider) protein is Toxin CSTX-15.